Consider the following 323-residue polypeptide: Acetyl esterase (323 aa).

The short motif at His91–Gly93 is the Involved in the stabilization of the negatively charged intermediate by the formation of the oxyanion hole element. Active-site residues include Ser165, Asp262, and His292.

This sequence belongs to the 'GDXG' lipolytic enzyme family. As to quaternary structure, homodimer. Interacts with MalT and MelA.

It localises to the cytoplasm. Functionally, displays esterase activity towards short chain fatty esters (acyl chain length of up to 8 carbons). Able to hydrolyze triacetylglycerol (triacetin) and tributyrylglycerol (tributyrin), but not trioleylglycerol (triolein) or cholesterol oleate. Negatively regulates MalT activity by antagonizing maltotriose binding. Inhibits MelA galactosidase activity. In Salmonella agona (strain SL483), this protein is Acetyl esterase.